Consider the following 348-residue polypeptide: tRNA N6-adenosine threonylcarbamoyltransferase (348 aa).

Fe cation contacts are provided by His-114 and His-118. Residues 137 to 141 (LVSGG), Asp-171, Gly-184, Asp-188, and Asn-283 contribute to the substrate site. Asp-311 is a Fe cation binding site.

This sequence belongs to the KAE1 / TsaD family. Fe(2+) serves as cofactor.

Its subcellular location is the cytoplasm. The enzyme catalyses L-threonylcarbamoyladenylate + adenosine(37) in tRNA = N(6)-L-threonylcarbamoyladenosine(37) in tRNA + AMP + H(+). Its function is as follows. Required for the formation of a threonylcarbamoyl group on adenosine at position 37 (t(6)A37) in tRNAs that read codons beginning with adenine. Is involved in the transfer of the threonylcarbamoyl moiety of threonylcarbamoyl-AMP (TC-AMP) to the N6 group of A37, together with TsaE and TsaB. TsaD likely plays a direct catalytic role in this reaction. The sequence is that of tRNA N6-adenosine threonylcarbamoyltransferase from Nocardioides sp. (strain ATCC BAA-499 / JS614).